Here is a 410-residue protein sequence, read N- to C-terminus: Elongation factor Tu, chloroplastic (410 aa).

The region spanning 10 to 214 is the tr-type G domain; that stretch reads KPHVNIGTIG…QVDAYIPTPE (205 aa). The G1 stretch occupies residues 19–26; it reads GHVDHGKT. 19-26 is a GTP binding site; the sequence is GHVDHGKT. Position 26 (T26) interacts with Mg(2+). A G2 region spans residues 60–64; that stretch reads GITIN. Residues 81-84 form a G3 region; the sequence is DCPG. Residues 81–85 and 136–139 contribute to the GTP site; these read DCPGH and NKED. The tract at residues 136-139 is G4; the sequence is NKED. The interval 174–176 is G5; the sequence is SAL.

This sequence belongs to the TRAFAC class translation factor GTPase superfamily. Classic translation factor GTPase family. EF-Tu/EF-1A subfamily.

Its subcellular location is the plastid. The protein localises to the chloroplast. It catalyses the reaction GTP + H2O = GDP + phosphate + H(+). GTP hydrolase that promotes the GTP-dependent binding of aminoacyl-tRNA to the A-site of ribosomes during protein biosynthesis. The chain is Elongation factor Tu, chloroplastic (tufA) from Chlorokybus atmophyticus (Soil alga).